A 328-amino-acid polypeptide reads, in one-letter code: Palmitoyltransferase ZDHHC15A (328 aa).

Topologically, residues 1–14 (MLLPACLRRCARLL) are cytoplasmic. The chain crosses the membrane as a helical span at residues 15-35 (FWIPVLVVIVVVMWSYYAYVV). Over 36–48 (HFCWILLSSATQR) the chain is Lumenal. A helical membrane pass occupies residues 49–69 (VVFLCLFHLCFGMFSWSFWKA). The Cytoplasmic segment spans residues 70–166 (VSTPPSSPSV…NNCMGFSNYK (97 aa)). In terms of domain architecture, DHHC spans 123–173 (RFCHHCQLIKPDRCHHCSVCQTCVLKMDHHCLWLNNCMGFSNYKFFMLFLL). Zn(2+) contacts are provided by Cys125 and Cys128. Substrate is bound at residue Lys132. The Zn(2+) site is built by His138, Cys139, Cys142, Cys145, and His152. Cys153 (S-palmitoyl cysteine intermediate) is an active-site residue. Cys159 contributes to the Zn(2+) binding site. Residues 167-187 (FFMLFLLYSLLYCLLIVSTVT) traverse the membrane as a helical segment. The Lumenal segment spans residues 188 to 206 (PTVIQLWRGRLFDSCVKLH). A helical transmembrane segment spans residues 207 to 227 (VLFLTLVSAIFAITLCFLLIF). Over 228–328 (HIWLLTSNKT…KEAAVTIAVD (101 aa)) the chain is Cytoplasmic.

It belongs to the DHHC palmitoyltransferase family. Post-translationally, autopalmitoylated (in vitro).

The protein resides in the golgi apparatus membrane. The protein localises to the postsynaptic density. The enzyme catalyses L-cysteinyl-[protein] + hexadecanoyl-CoA = S-hexadecanoyl-L-cysteinyl-[protein] + CoA. The catalysed reaction is L-cysteinyl-[protein] + tetradecanoyl-CoA = S-tetradecanoyl-L-cysteinyl-[protein] + CoA. It carries out the reaction L-cysteinyl-[protein] + octadecanoyl-CoA = S-octadecanoyl-L-cysteinyl-[protein] + CoA. Palmitoyltransferase that catalyzes the addition of palmitate onto various protein substrates. Has no stringent fatty acid selectivity and in addition to palmitate can also transfer onto target proteins myristate from tetradecanoyl-CoA and stearate from octadecanoyl-CoA. May thereby regulate target proteins association and localization to membranes. In Danio rerio (Zebrafish), this protein is Palmitoyltransferase ZDHHC15A (zdhhc15a).